We begin with the raw amino-acid sequence, 283 residues long: ATP phosphoribosyltransferase (283 aa).

This sequence belongs to the ATP phosphoribosyltransferase family. Long subfamily. Mg(2+) is required as a cofactor.

Its subcellular location is the cytoplasm. It carries out the reaction 1-(5-phospho-beta-D-ribosyl)-ATP + diphosphate = 5-phospho-alpha-D-ribose 1-diphosphate + ATP. It functions in the pathway amino-acid biosynthesis; L-histidine biosynthesis; L-histidine from 5-phospho-alpha-D-ribose 1-diphosphate: step 1/9. With respect to regulation, feedback inhibited by histidine. In terms of biological role, catalyzes the condensation of ATP and 5-phosphoribose 1-diphosphate to form N'-(5'-phosphoribosyl)-ATP (PR-ATP). Has a crucial role in the pathway because the rate of histidine biosynthesis seems to be controlled primarily by regulation of HisG enzymatic activity. This chain is ATP phosphoribosyltransferase, found in Rhodococcus opacus (strain B4).